The primary structure comprises 113 residues: Large ribosomal subunit protein eL31A (113 aa).

Belongs to the eukaryotic ribosomal protein eL31 family. In terms of assembly, component of the large ribosomal subunit (LSU). Mature yeast ribosomes consist of a small (40S) and a large (60S) subunit. The 40S small subunit contains 1 molecule of ribosomal RNA (18S rRNA) and 33 different proteins (encoded by 57 genes). The large 60S subunit contains 3 rRNA molecules (25S, 5.8S and 5S rRNA) and 46 different proteins (encoded by 81 genes).

Its subcellular location is the cytoplasm. In terms of biological role, component of the ribosome, a large ribonucleoprotein complex responsible for the synthesis of proteins in the cell. The small ribosomal subunit (SSU) binds messenger RNAs (mRNAs) and translates the encoded message by selecting cognate aminoacyl-transfer RNA (tRNA) molecules. The large subunit (LSU) contains the ribosomal catalytic site termed the peptidyl transferase center (PTC), which catalyzes the formation of peptide bonds, thereby polymerizing the amino acids delivered by tRNAs into a polypeptide chain. The nascent polypeptides leave the ribosome through a tunnel in the LSU and interact with protein factors that function in enzymatic processing, targeting, and the membrane insertion of nascent chains at the exit of the ribosomal tunnel. The chain is Large ribosomal subunit protein eL31A from Saccharomyces cerevisiae (strain ATCC 204508 / S288c) (Baker's yeast).